Here is a 224-residue protein sequence, read N- to C-terminus: Serum amyloid P-component (224 aa).

The first 20 residues, 1 to 20, serve as a signal peptide directing secretion; that stretch reads MDKLLLWMFVFTSLLSEAFC. One can recognise a Pentraxin (PTX) domain in the interval 25 to 224; it reads KRKVFVFPRE…YVVIRPRVWD (200 aa). N52 carries N-linked (GlcNAc...) asparagine glycosylation. C56 and C115 are oxidised to a cystine. Ca(2+) is bound by residues D78, N79, E156, Q157, D158, and Q168.

This sequence belongs to the pentraxin family. In terms of assembly, homopentamer. Pentraxin (or pentaxin) have a discoid arrangement of 5 non-covalently bound subunits. It depends on Ca(2+) as a cofactor.

The protein localises to the secreted. This chain is Serum amyloid P-component (Apcs), found in Mus musculus (Mouse).